Reading from the N-terminus, the 433-residue chain is Cell adhesion molecule 2 (433 aa).

The first 24 residues, 1–24, serve as a signal peptide directing secretion; sequence MILQPSALLCLSSLWGVIVQASQG. Over 25 to 365 the chain is Extracellular; it reads QFPVTQNVTV…ALPGPVATDH (341 aa). The Ig-like V-type domain occupies 27-114; it reads PVTQNVTVVE…SLFTMPVKTS (88 aa). N-linked (GlcNAc...) asparagine glycosylation is found at Asn-31, Asn-41, and Asn-51. Intrachain disulfides connect Cys-44-Cys-104, Cys-146-Cys-203, and Cys-248-Cys-296. 2 Ig-like C2-type domains span residues 127-217 and 227-312; these read PHIS…PQIA and PTVR…YVLI. Asn-287 and Asn-291 each carry an N-linked (GlcNAc...) asparagine glycan. A helical membrane pass occupies residues 366-386; the sequence is ALIGGVVAVVVFVTLCSIILI. Topologically, residues 387–433 are cytoplasmic; that stretch reads GRYLARHKGTYLTNEAKGAEDAPDADTAIINAEGSQVNAEEKKEYFI.

The protein belongs to the nectin family.

Its subcellular location is the membrane. The protein is Cell adhesion molecule 2 (cadm2) of Xenopus tropicalis (Western clawed frog).